Consider the following 144-residue polypeptide: Transcription antitermination protein NusB (144 aa).

It belongs to the NusB family.

Involved in transcription antitermination. Required for transcription of ribosomal RNA (rRNA) genes. Binds specifically to the boxA antiterminator sequence of the ribosomal RNA (rrn) operons. The chain is Transcription antitermination protein NusB from Haemophilus influenzae (strain PittEE).